Consider the following 315-residue polypeptide: piRNA biogenesis protein EXD1 (315 aa).

Positions Ile141–Gln228 constitute a 3'-5' exonuclease domain.

This sequence belongs to the EXD1 family. As to quaternary structure, homodimer. Component of the PET complex, at least composed of EXD1, SIWI, TDRD12 and piRNAs.

It localises to the cytoplasm. Its function is as follows. RNA-binding component of the PET complex, a multiprotein complex required for the processing of piRNAs during spermatogenesis. The piRNA metabolic process mediates the repression of transposable elements during meiosis by forming complexes composed of piRNAs and Piwi proteins and governs the methylation and subsequent repression of transposable elements, preventing their mobilization, which is essential for the germline integrity. The PET complex is required during the secondary piRNAs metabolic process for the PIWIL2 slicing-triggered loading of PIWIL4 piRNAs. In the PET complex, EXD1 probably acts as an RNA adapter. EXD1 is an inactive exonuclease. The protein is piRNA biogenesis protein EXD1 of Bombyx mori (Silk moth).